The primary structure comprises 376 residues: 28S rRNA (uridine-N(3))-methyltransferase (376 aa).

Disordered regions lie at residues 1-33 (MAER…EEKK) and 49-71 (AQEE…DRGR). Over residues 15–33 (HGQRIEWRKWKQQKKEEKK) the composition is skewed to basic and acidic residues. Residues Thr289, Arg292, Gly312, Asn341, and Thr342 each contribute to the S-adenosyl-L-homocysteine site. 4 residues coordinate S-adenosyl-L-methionine: Arg292, Gly312, Asn341, and Thr342.

The protein belongs to the class IV-like SAM-binding methyltransferase superfamily. As to quaternary structure, interacts with INCA1.

Its subcellular location is the cytoplasm. It localises to the cytoskeleton. The protein localises to the spindle. The protein resides in the chromosome. It is found in the centromere. Its subcellular location is the kinetochore. It localises to the microtubule organizing center. The protein localises to the centrosome. The enzyme catalyses uridine in 28S rRNA + S-adenosyl-L-methionine = N(3)-methyluridine in 28S rRNA + S-adenosyl-L-homocysteine + H(+). In terms of biological role, S-adenosyl-L-methionine-dependent methyltransferase that specifically methylates the N3 position of a uridine in 28S rRNA. Required for association of the centrosomes with the poles of the bipolar mitotic spindle during metaphase. Also involved in chromosome alignment. May promote centrosome maturation probably by recruiting A-kinase anchor protein AKAP9 to centrosomes in early mitosis. Binds specifically to miRNA MIR145 hairpin, regulates MIR145 expression at a postranscriptional level. The protein is 28S rRNA (uridine-N(3))-methyltransferase of Homo sapiens (Human).